The chain runs to 295 residues: Ethanolamine ammonia-lyase small subunit (295 aa).

Residues V207, E228, and C258 each coordinate adenosylcob(III)alamin.

Belongs to the EutC family. As to quaternary structure, the basic unit is a heterodimer which dimerizes to form tetramers. The heterotetramers trimerize; 6 large subunits form a core ring with 6 small subunits projecting outwards. Adenosylcob(III)alamin serves as cofactor.

Its subcellular location is the bacterial microcompartment. The enzyme catalyses ethanolamine = acetaldehyde + NH4(+). Its pathway is amine and polyamine degradation; ethanolamine degradation. Its function is as follows. Catalyzes the deamination of various vicinal amino-alcohols to oxo compounds. Allows this organism to utilize ethanolamine as the sole source of nitrogen and carbon in the presence of external vitamin B12. The polypeptide is Ethanolamine ammonia-lyase small subunit (Escherichia coli (strain 55989 / EAEC)).